We begin with the raw amino-acid sequence, 1235 residues long: MILDADYITEDGKPIIRIFKKENGEFKVEYDRNFRPYIYALLRDDSAIDEIKKITAQRHGKVVRIVETEKIQRKFLGRPIEVWKLYLEHPQDVPAIRDKIREHPAVVDIFEYDIPFAKRYLIDKGLTPMEGNEKLTFLAVDIETLYHEGEEFGKGPVIMISYADEEGAKVITWKKIDLPYVEVVSSEREMIKRLIRVIKEKDPDVIITYNGDNFDFPYLLKRAEKLGIKLLLGRDNSEPKMQKMGDSLAVEIKGRIHFDLFPVIRRTINLPTYTLEAVYEAIFGKPKEKVYADEIAKAWETGEGLERVAKYSMEDAKVTYELGREFFPMEAQLARLVGQPVWDVSRSSTGNLVEWFLLRKAYERNELAPNKPDEKEYERRLRESYEGGYVKEPEKGLWEGIVSLDFRSLYPSIIITHNVSPDTLNREGCEEYDVAPKVGHRFCKDFPGFIPSLLGQLLEERQKIKKRMKESKDPVEKKLLDYRQRAIKILANSILPDEWLPIVENEKVRFVKIGDFIDREIEENAERVKRDGETEILEVKDLKALSFNRETKKSELKKVKALIRHRYSGKVYSIKLKSGRRIKITSGHSLFSVKNGKLVKVRGDELKPGDLVVVPGRLKLPESKQVLNLVELLLKLPEEETSNIVMMIPVKGRKNFFKGMLKTLYWIFGEGERPRTAGRYLKHLERLGYVKLKRRGCEVLDWESLKRYRKLYETLIKNLKYNGNSRAYMVEFNSLRDVVSLMPIEELKEWIIGEPRGPKIGTFIDVDDSFAKLLGYYISSGDVEKDRVKFHSKDQNVLEDIAKLAEKLFGKVRRGRGYIEVSGKISHAIFRVLAEGKRIPEFIFTSPMDIKVAFLKGLNGNAEELTFSTKSELLVNQLILLLNSIGVSDIKIEHEKGVYRVYINKKESSNGDIVLDSVESIEVEKYEGYVYDLSVEDNENFLVGFGLLYAHNSYYGYYGYAKARWYCKECAESVTAWGRQYIDLVRRELEARGFKVLYIDTDGLYATIPGVKDWEEVKRRALEFVDYINSKLPGVLELEYEGFYARGFFVTKKKYALIDEEGKIVTRGLEIVRRDWSEIAKETQARVLEAILKHGNVEEAVKIVKDVTEKLTNYEVPPEKLVIYEQITRPINEYKAIGPHVAVAKRLMARGIKVKPGMVIGYIVLRGDGPISKRAISIEEFDPRKHKYDAEYYIENQVLPAVERILKAFGYKREDLRWQKTKQVGLGAWIKVKKS.

Positions 773 to 887 constitute a DOD-type homing endonuclease domain; that stretch reads LLGYYISSGD…LILLLNSIGV (115 aa).

Belongs to the DNA polymerase type-B family. Post-translationally, this protein undergoes a protein self splicing that involves a post-translational excision of the intervening region (intein) followed by peptide ligation.

It carries out the reaction DNA(n) + a 2'-deoxyribonucleoside 5'-triphosphate = DNA(n+1) + diphosphate. The sequence is that of DNA polymerase (pol) from Pyrococcus horikoshii (strain ATCC 700860 / DSM 12428 / JCM 9974 / NBRC 100139 / OT-3).